The primary structure comprises 181 residues: Adenine phosphoribosyltransferase (181 aa).

Belongs to the purine/pyrimidine phosphoribosyltransferase family. In terms of assembly, homodimer.

It localises to the cytoplasm. It catalyses the reaction AMP + diphosphate = 5-phospho-alpha-D-ribose 1-diphosphate + adenine. It participates in purine metabolism; AMP biosynthesis via salvage pathway; AMP from adenine: step 1/1. In terms of biological role, catalyzes a salvage reaction resulting in the formation of AMP, that is energically less costly than de novo synthesis. This chain is Adenine phosphoribosyltransferase, found in Vibrio atlanticus (strain LGP32) (Vibrio splendidus (strain Mel32)).